The sequence spans 87 residues: Protein L (87 aa).

Functionally, this protein inhibits the multiplication of double-stranded DNA phages, such as P1 and lambda. The sequence is that of Protein L (L) from Escherichia coli.